The sequence spans 295 residues: Ankyrin repeat and SOCS box protein 17 (295 aa).

The ANK repeat unit spans residues 146 to 176; the sequence is SGITPLLYVAQTRQSNILKILLQYGILEREK. The region spanning 232-295 is the SOCS box domain; it reads LGRRPIISNW…RLQKYLNLES (64 aa).

The protein belongs to the ankyrin SOCS box (ASB) family.

The protein operates within protein modification; protein ubiquitination. May be a substrate-recognition component of a SCF-like ECS (Elongin-Cullin-SOCS-box protein) E3 ubiquitin-protein ligase complex which mediates the ubiquitination and subsequent proteasomal degradation of target proteins. In Canis lupus familiaris (Dog), this protein is Ankyrin repeat and SOCS box protein 17 (ASB17).